The primary structure comprises 399 residues: MGNHALIKQINKLLILKTILDHRTISRAKISKLVDLNKATVSNLTDELIKEGFVIEKGYGHSKGGRRPVLLEVNKNVGLIIGIDLGVNYIHLVLTNFIGEIIWERNMAIKLGEKQEKILESLFIILEEAIKAAPPTQKGILGIGIGVPGIVEKNSGTVLLAPNLKWQDVPLKRMVESRFGLPVYIDNEANAGALGEKWFGGWGDVSHLLYVSVGIGIGAGIVIGEEVYRGAKGFAGEVGHMTIDFNDDVCSCGNVGCLENFASERALLSLIKTLVESGVEDEYINRDTVEEMDAGYIIQSALQRSRVAMNAITDIANKLGIGIANLVNIFNPDIVVIGNKASFMGDLFLEELRRIVYKRAFITQYHHVRVEVSKLKDRACVLGCVAMVISDMLAFPDYV.

Residues 27 to 46 (RAKISKLVDLNKATVSNLTD) constitute a DNA-binding region (H-T-H motif).

It belongs to the ROK (NagC/XylR) family.

Functionally, transcriptional repressor of xylose-utilizing enzymes. The chain is Putative xylose repressor (xylR) from Caldicellulosiruptor sp. (strain Rt8B.4).